A 229-amino-acid chain; its full sequence is uncharacterized protein (229 aa).

The segment at 61 to 229 (MQAEDKVSKP…TESEDKPKRG (169 aa)) is disordered. The segment covering 109 to 128 (QQEKQQPEKAVVEQQEKQQP) has biased composition (basic and acidic residues). A compositionally biased stretch (low complexity) spans 166–194 (QPEQPERQQQAQPERQQQAQPERQQQAQP). Residues 195-204 (EEAEDAEQEP) are compositionally biased toward acidic residues. Residues 218–229 (TQTESEDKPKRG) are compositionally biased toward basic and acidic residues.

This is an uncharacterized protein from Frog virus 3 (isolate Goorha) (FV-3).